The sequence spans 190 residues: CD70 antigen (190 aa).

At M1–S17 the chain is on the cytoplasmic side. Residues I18 to G38 form a helical membrane-spanning segment. The Extracellular segment spans residues Q39–P190. The 137-residue stretch at D52–V188 folds into the THD domain. N59 and N110 each carry an N-linked (GlcNAc...) asparagine glycan. 2 disulfide bridges follow: C111-C148 and C130-C165. N167 is a glycosylation site (N-linked (GlcNAc...) asparagine).

It belongs to the tumor necrosis factor family. In terms of assembly, homotrimer. In terms of processing, N-glycosylated.

Its subcellular location is the cell membrane. In terms of biological role, expressed at the plasma membrane of B cells, it is the ligand of the CD27 receptor which is specifically expressed at the surface of T cells. The CD70-CD27 signaling pathway mediates antigen-specific T cell activation and expansion which in turn provides immune surveillance of B cells. The polypeptide is CD70 antigen (Sus scrofa (Pig)).